A 278-amino-acid chain; its full sequence is Large ribosomal subunit protein uL2 (278 aa).

Residues Ala-208 to Lys-278 are disordered. Residues Gly-209–Gln-219 show a composition bias toward basic residues. Positions Lys-258–Ile-270 are enriched in basic and acidic residues.

This sequence belongs to the universal ribosomal protein uL2 family. As to quaternary structure, part of the 50S ribosomal subunit. Forms a bridge to the 30S subunit in the 70S ribosome.

One of the primary rRNA binding proteins. Required for association of the 30S and 50S subunits to form the 70S ribosome, for tRNA binding and peptide bond formation. It has been suggested to have peptidyltransferase activity; this is somewhat controversial. Makes several contacts with the 16S rRNA in the 70S ribosome. This chain is Large ribosomal subunit protein uL2, found in Lactobacillus delbrueckii subsp. bulgaricus (strain ATCC 11842 / DSM 20081 / BCRC 10696 / JCM 1002 / NBRC 13953 / NCIMB 11778 / NCTC 12712 / WDCM 00102 / Lb 14).